The sequence spans 512 residues: Glycine betaine transporter OpuD (512 aa).

12 helical membrane-spanning segments follow: residues I5–I25, F45–F65, F82–F102, F135–Y155, I186–A206, A222–W242, M257–M277, W312–A332, F343–G363, L395–A415, W441–L461, and T464–Y484.

The protein belongs to the BCCT transporter (TC 2.A.15) family.

It localises to the cell membrane. Activity is stimulated by high osmolarity. Functionally, high-affinity uptake of glycine betaine. Does not mediate either carnitine or choline uptake. The protein is Glycine betaine transporter OpuD (opuD) of Bacillus subtilis (strain 168).